The primary structure comprises 65 residues: Light-harvesting protein B-800-850 alpha chain C (65 aa).

Residues 1 to 11 lie on the Cytoplasmic side of the membrane; sequence MNQGRIWTVVS. A helical membrane pass occupies residues 12-35; that stretch reads PTVGLPLLLGSVAAIAFAVHFAVL. Residue histidine 31 participates in a bacteriochlorophyll binding. At 36–65 the chain is on the periplasmic side; the sequence is ENTSWVAAFMNGKSVAAAPAPAAPAAPAKK.

Belongs to the antenna complex alpha subunit family. As to quaternary structure, the core complex is formed by different alpha and beta chains, binding bacteriochlorophyll molecules, and arranged most probably in tetrameric structures disposed around the reaction center. The non-pigmented gamma chains may constitute additional components.

Its subcellular location is the cell inner membrane. Functionally, antenna complexes are light-harvesting systems, which transfer the excitation energy to the reaction centers. The protein is Light-harvesting protein B-800-850 alpha chain C (pucAC) of Rhodopseudomonas palustris.